We begin with the raw amino-acid sequence, 551 residues long: E3 SUMO-protein ligase CBX4 (551 aa).

Positions 11–69 constitute a Chromo domain; sequence FAVESIEKKRIRKGRVEYLVKWRGWSPKYNTWEPEENILDPRLLIAFQNRERQEQLMGY. Glycyl lysine isopeptide (Lys-Gly) (interchain with G-Cter in SUMO2) cross-links involve residues Lys-77, Lys-106, Lys-114, and Lys-125. Residues 125-152 form a disordered region; that stretch reads KKHHQYQPHSKERSGKPPPPGKSGKYYY. Lys-149 carries the post-translational modification N6-acetyllysine; alternate. Residue Lys-149 forms a Glycyl lysine isopeptide (Lys-Gly) (interchain with G-Cter in SUMO2); alternate linkage. Glycyl lysine isopeptide (Lys-Gly) (interchain with G-Cter in SUMO2) cross-links involve residues Lys-157, Lys-167, and Lys-178. Positions 172 to 193 are disordered; that stretch reads QYQGGHKEAPSPTCPDLGTKSH. Phosphoserine is present on Ser-182. Glycyl lysine isopeptide (Lys-Gly) (interchain with G-Cter in SUMO2) cross-links involve residues Lys-191, Lys-205, Lys-212, Lys-223, Lys-249, Lys-268, Lys-278, and Lys-280. Residues 216 to 244 are disordered; the sequence is GGAGAPGKGSEKGPPNGMTPAPKEAVTGN. Basic and acidic residues-rich tracts occupy residues 281 to 291, 298 to 310, and 317 to 332; these read SGEAAEGEARS, AAEERHPQGDRTF, and SEEKKAEVPCKRREEE. Disordered regions lie at residues 281–399 and 430–451; these read SGEA…TVGL and TPTCLGGSPVSEHPANVSPTAA. Residues Lys-321, Lys-353, and Lys-366 each participate in a glycyl lysine isopeptide (Lys-Gly) (interchain with G-Cter in SUMO2) cross-link. The segment covering 381–396 has biased composition (basic residues); the sequence is PAHHHHHHHHHHHHHT. Phosphoserine is present on Ser-463. Residue Lys-490 forms a Glycyl lysine isopeptide (Lys-Gly) (interchain with G-Cter in SUMO2); alternate linkage. Lys-490 participates in a covalent cross-link: Glycyl lysine isopeptide (Lys-Gly) (interchain with G-Cter in SUMO); alternate.

As to quaternary structure, interacts with SUV39H1 and HIPK2. Interacts with CSNK2B. Component of a PRC1-like complex. The composition of the PRC1 complex differs between the PRC1 complex in pluripotent embryonic stem cells containing RNF2, CBX7 and PCGF2, and the PRC1 complex in differentiating cells containing RNF2, CBX2, CBX4 and BMI1. Interacts with RNF2. Interacts (via chromodomain) with histone H3K9Me3 and single-stranded RNA (ssRNA). Interacts with CHTOP. May interact with H3C15 and H3C1. Interacts with PRDM1. Ubiquitinated. Ubiquitination regulates the function of the Polycomb group (PcG) multiprotein PRC1-like complex. Deubiquitinated by USP26. As to expression, expressed in embryoid bodies.

The protein resides in the nucleus. The protein localises to the nucleus speckle. Its pathway is protein modification; protein sumoylation. Functionally, E3 SUMO-protein ligase that catalyzes sumoylation of target proteins by promoting the transfer of SUMO from the E2 enzyme to the substrate. Involved in the sumoylation of HNRNPK, a p53/TP53 transcriptional coactivator, hence indirectly regulates p53/TP53 transcriptional activation resulting in p21/CDKN1A expression. In terms of biological role, component of a Polycomb group (PcG) multiprotein PRC1-like complex, a complex class required to maintain the transcriptionally repressive state of many genes, including Hox genes, throughout development. PcG PRC1 complex acts via chromatin remodeling and modification of histones; it mediates monoubiquitination of histone H2A 'Lys-119', rendering chromatin heritably changed in its expressibility. Binds to histone H3 trimethylated at 'Lys-9' (H3K9me3). Plays a role in the lineage differentiation of the germ layers in embryonic development. The protein is E3 SUMO-protein ligase CBX4 (Cbx4) of Mus musculus (Mouse).